A 470-amino-acid polypeptide reads, in one-letter code: Dihydrolipoyl dehydrogenase (470 aa).

FAD is bound by residues glutamate 39–cysteine 47, lysine 56, and alanine 119. Cysteine 47 and cysteine 52 are oxidised to a cystine. Residues glycine 183–isoleucine 187, glutamate 206, and threonine 271–arginine 274 each bind NAD(+). The FAD site is built by aspartate 314 and alanine 322. The active-site Proton acceptor is histidine 446.

The protein belongs to the class-I pyridine nucleotide-disulfide oxidoreductase family. As to quaternary structure, homodimer. Identified in a complex with PdhC. The cofactor is FAD.

The protein localises to the cytoplasm. The catalysed reaction is N(6)-[(R)-dihydrolipoyl]-L-lysyl-[protein] + NAD(+) = N(6)-[(R)-lipoyl]-L-lysyl-[protein] + NADH + H(+). Functionally, lipoamide dehydrogenase is a component of the alpha-ketoacid dehydrogenase complexes. The chain is Dihydrolipoyl dehydrogenase (pdhD) from Geobacillus stearothermophilus (Bacillus stearothermophilus).